The chain runs to 554 residues: 3-(3-hydroxy-phenyl)propionate/3-hydroxycinnamic acid hydroxylase (554 aa).

FAD-binding positions include 17-46 and 285-295; these read QVAI…VVEK and FRIDRVLLAGD.

It belongs to the PheA/TfdB FAD monooxygenase family. FAD serves as cofactor.

The catalysed reaction is 3-(3-hydroxyphenyl)propanoate + NADH + O2 + H(+) = 3-(2,3-dihydroxyphenyl)propanoate + NAD(+) + H2O. It carries out the reaction (2E)-3-(3-hydroxyphenyl)prop-2-enoate + NADH + O2 + H(+) = (2E)-3-(2,3-dihydroxyphenyl)prop-2-enoate + NAD(+) + H2O. Its pathway is aromatic compound metabolism; 3-phenylpropanoate degradation. Its function is as follows. Catalyzes the insertion of one atom of molecular oxygen into position 2 of the phenyl ring of 3-(3-hydroxyphenyl)propionate (3-HPP) and hydroxycinnamic acid (3HCI). In Escherichia coli O17:K52:H18 (strain UMN026 / ExPEC), this protein is 3-(3-hydroxy-phenyl)propionate/3-hydroxycinnamic acid hydroxylase.